The sequence spans 362 residues: Mannose-1-phosphate guanyltransferase (362 aa).

It belongs to the transferase hexapeptide repeat family.

The protein localises to the cytoplasm. The catalysed reaction is alpha-D-mannose 1-phosphate + GTP + H(+) = GDP-alpha-D-mannose + diphosphate. The protein operates within nucleotide-sugar biosynthesis; GDP-alpha-D-mannose biosynthesis; GDP-alpha-D-mannose from alpha-D-mannose 1-phosphate (GTP route): step 1/1. Functionally, involved in cell wall synthesis where it is required for glycosylation. Involved in cell cycle progression through cell-size checkpoint. This chain is Mannose-1-phosphate guanyltransferase (MPG1), found in Debaryomyces hansenii (strain ATCC 36239 / CBS 767 / BCRC 21394 / JCM 1990 / NBRC 0083 / IGC 2968) (Yeast).